The primary structure comprises 447 residues: NADH-quinone oxidoreductase subunit F (447 aa).

An NAD(+)-binding site is contributed by 61 to 70 (GRGGAGFSTG). 174–221 (GAGRYICGEETALINSLEGRRANPRAKPPFPAVFGLWGKPTCVNNVET) is a binding site for FMN. [4Fe-4S] cluster is bound by residues Cys352, Cys355, Cys358, and Cys399.

It belongs to the complex I 51 kDa subunit family. As to quaternary structure, composed of 13 different subunits. Subunits NuoCD, E, F, and G constitute the peripheral sector of the complex. [4Fe-4S] cluster serves as cofactor. It depends on FMN as a cofactor.

It carries out the reaction a quinone + NADH + 5 H(+)(in) = a quinol + NAD(+) + 4 H(+)(out). In terms of biological role, NDH-1 shuttles electrons from NADH, via FMN and iron-sulfur (Fe-S) centers, to quinones in the respiratory chain. Couples the redox reaction to proton translocation (for every two electrons transferred, four hydrogen ions are translocated across the cytoplasmic membrane), and thus conserves the redox energy in a proton gradient. This is NADH-quinone oxidoreductase subunit F (nuoF) from Buchnera aphidicola subsp. Schizaphis graminum (strain Sg).